The primary structure comprises 238 residues: MTPHINAPEGAFADVVLMPGDPLRAKYIAETFLENAKEVTNVRNMLGYTGTYKGRPVSVMGHGMGIPSCSIYTKELITEYGVKKIIRVGSCGAVRNDVKVRDVIIGLGACTDSKVNRIRFKDNDFAAIADFDMTQAAVQAAKAKGINYRVGNLFSADLFYTPDVEMFDVMEKYGILGVEMEAAGIYGVAAEFGAKALSICTVSDHIRTGEQTSSEERQLTFNDMIEIALESVLLGDQA.

His4 provides a ligand contact to a purine D-ribonucleoside. Residues Gly20, Arg24, Arg43, and 87 to 90 contribute to the phosphate site; that span reads RVGS. Residues 179–181 and 203–204 contribute to the a purine D-ribonucleoside site; these read EME and SD. Asp204 (proton donor) is an active-site residue.

The protein belongs to the PNP/UDP phosphorylase family. Homohexamer; trimer of homodimers.

It catalyses the reaction a purine D-ribonucleoside + phosphate = a purine nucleobase + alpha-D-ribose 1-phosphate. It carries out the reaction a purine 2'-deoxy-D-ribonucleoside + phosphate = a purine nucleobase + 2-deoxy-alpha-D-ribose 1-phosphate. Its function is as follows. Catalyzes the reversible phosphorolytic breakdown of the N-glycosidic bond in the beta-(deoxy)ribonucleoside molecules, with the formation of the corresponding free purine bases and pentose-1-phosphate. This is Purine nucleoside phosphorylase DeoD-type from Mannheimia succiniciproducens (strain KCTC 0769BP / MBEL55E).